The primary structure comprises 85 residues: U4-theraphotoxin-Hhn1a (85 aa).

The first 22 residues, 1 to 22 (MKMTLIAILTCAAVLVLHTTAA), serve as a signal peptide directing secretion. The propeptide occupies 23-48 (EELEAESQLMEVGMPDTELAAVDEER). 3 disulfides stabilise this stretch: C52/C66, C56/C77, and C71/C82.

Belongs to the neurotoxin 12 (Hwtx-2) family. 02 (Hwtx-2) subfamily. In terms of assembly, monomer. As to expression, expressed by the venom gland.

It is found in the secreted. In terms of biological role, neurotoxin active on both insects and mammals. This Cyriopagopus hainanus (Chinese bird spider) protein is U4-theraphotoxin-Hhn1a.